We begin with the raw amino-acid sequence, 301 residues long: Ribosomal RNA small subunit methyltransferase H (301 aa).

Residues 31-33 (GGY), aspartate 49, phenylalanine 76, aspartate 97, and glutamine 104 each bind S-adenosyl-L-methionine.

The protein belongs to the methyltransferase superfamily. RsmH family.

It is found in the cytoplasm. The catalysed reaction is cytidine(1402) in 16S rRNA + S-adenosyl-L-methionine = N(4)-methylcytidine(1402) in 16S rRNA + S-adenosyl-L-homocysteine + H(+). Specifically methylates the N4 position of cytidine in position 1402 (C1402) of 16S rRNA. This Ehrlichia ruminantium (strain Gardel) protein is Ribosomal RNA small subunit methyltransferase H.